We begin with the raw amino-acid sequence, 1024 residues long: Multidrug resistance protein MdtC (1024 aa).

Helical transmembrane passes span 12–32, 333–353, 360–380, 387–407, 435–455, 469–489, 528–548, 853–873, 875–895, 897–917, 953–973, and 984–1004; these read VATT…FSLL, EVER…FIFL, LIPA…MYLC, LSLM…IVVL, VLSM…MAGL, VAIG…CAWL, WVMV…ISIP, LWLI…LYES, VHPL…LLAL, LFDA…IGIV, PIIM…LSSG, and ITIV…TPVI.

Belongs to the resistance-nodulation-cell division (RND) (TC 2.A.6) family. MdtC subfamily. As to quaternary structure, part of a tripartite efflux system composed of MdtA, MdtB and MdtC. MdtC forms a heteromultimer with MdtB.

The protein localises to the cell inner membrane. In Yersinia pestis bv. Antiqua (strain Antiqua), this protein is Multidrug resistance protein MdtC.